Consider the following 235-residue polypeptide: MSTVFALANIYKSFGRNKEVPVIVNATLQIKKGEIVALIGKSGSGKSTLLHIAGLLDTPSSGSILLNNIECTDKTSDKDKTYLRRHFLGFIYQFHHLLQEFSVLENVMLPQIITGKSKSIAKKNAMEILERVRLQDKLSMPISQLSGGERQRVAIARSLINCPLIVLADEPTGSLDNNTALEVFSLLQEYAKEKNIAILLATHNYSLAQKACRIVKIDSGILRSYSIDESGFNKI.

The ABC transporter domain occupies 5-235 (FALANIYKSF…SIDESGFNKI (231 aa)). 40–47 (GKSGSGKS) provides a ligand contact to ATP.

It belongs to the ABC transporter superfamily. Lipoprotein translocase (TC 3.A.1.125) family. In terms of assembly, the complex is composed of two ATP-binding proteins (LolD) and two transmembrane proteins (LolC and LolE).

Its subcellular location is the cell inner membrane. Its function is as follows. Part of the ABC transporter complex LolCDE involved in the translocation of mature outer membrane-directed lipoproteins, from the inner membrane to the periplasmic chaperone, LolA. Responsible for the formation of the LolA-lipoprotein complex in an ATP-dependent manner. The polypeptide is Lipoprotein-releasing system ATP-binding protein LolD (Ehrlichia chaffeensis (strain ATCC CRL-10679 / Arkansas)).